Here is a 437-residue protein sequence, read N- to C-terminus: Tol-Pal system protein TolB (437 aa).

A signal peptide spans 1–23; sequence MQKRHPIIYLLITLLIFVPVSYG.

The protein belongs to the TolB family. In terms of assembly, the Tol-Pal system is composed of five core proteins: the inner membrane proteins TolA, TolQ and TolR, the periplasmic protein TolB and the outer membrane protein Pal. They form a network linking the inner and outer membranes and the peptidoglycan layer.

It localises to the periplasm. Its function is as follows. Part of the Tol-Pal system, which plays a role in outer membrane invagination during cell division and is important for maintaining outer membrane integrity. This chain is Tol-Pal system protein TolB, found in Coxiella burnetii (strain RSA 493 / Nine Mile phase I).